A 528-amino-acid chain; its full sequence is Nucleobase-ascorbate transporter 5 (528 aa).

Residues 1–20 are disordered; the sequence is MSAPKSGGDPLPHPPKEQLP. The next 12 membrane-spanning stretches (helical) occupy residues 35–55, 71–91, 93–113, 133–153, 159–179, 181–201, 219–239, 285–305, 367–387, 390–410, 418–438, and 460–479; these read AVLL…LIPS, LIQT…VFGT, LPAV…IMLS, TQGA…SGLW, FLSP…LYEL, FPGV…LILI, FAVI…TLGG, FAMM…FIAV, AGFM…ASIP, IIAA…LSLL, FRTL…PQYF, and MVNV…AYLL.

Belongs to the nucleobase:cation symporter-2 (NCS2) (TC 2.A.40) family. As to expression, weakly expressed in the vasculature of developing leaves.

Its subcellular location is the membrane. The protein is Nucleobase-ascorbate transporter 5 (NAT5) of Arabidopsis thaliana (Mouse-ear cress).